A 704-amino-acid chain; its full sequence is MQNSEGGADSPASVALRPSAAAPPVPASPQRVLVQAASSAPKGAQMQPISLPRVQQVPQQVQPVQHVYPAQVQYAEGGDAVYTNGAIRTAYTYNPEPQMYAPSSAASYFEAPGGAQVTVAASSPPAVPSHSMVGITMDVGGSPIVSSTGAYLIHGGMDSTRHSLAHTSRSSPATLEMAIENLQKSEGITSHKSGLLNSHLQWLLDNYETAEGVSLPRSSLYNHYLRHCQEHKLDPVNAASFGKLIRSVFMGLRTRRLGTRGNSKYHYYGIRLKPDSPLNRLQEDTQYMAMRQQPMHQKPRYRPAQKTDSLGDSSSHSGLHSTPEQTTAAQNQHHQQYIDVSHVFPEFPAPDLGSVLLQDGVTLHDVKALQLVYRRHCEATVDVVMNLQFHYIEKLWLSFWNSKASSSDGPTSLPASDEDPEGAVLPKDKLISLCQCDPILRWMRSCDHILYQALVEILIPDVLRPVPSTLTQAIRNFAKSLEGWLTNAMSDFPQQVIQTKVGVVSAFAQTLRRYTSLNHLAQAARAVLQNTSQINQMLSDLNRVDFANVQEQASWVCQCEESVVQRLEQDFKLTLQQQSSLDQWASWLDSVVTQVLKQHAGSPSFPKAARQFLLKWSFYSSMVIRDLTLRSAASFGSFHLIRLLYDEYMFYLVEHRVAEATGETPIAVMGERLSQNVTSALWPGSEPGSSPGELCSSAWLATLC.

The interval 1–39 (MQNSEGGADSPASVALRPSAAAPPVPASPQRVLVQAASS) is disordered. Residues 10 to 20 (SPASVALRPSA) show a composition bias toward low complexity. The residue at position 28 (serine 28) is a Phosphoserine. Residues 199–274 (HLQWLLDNYE…YHYYGIRLKP (76 aa)) constitute a DNA-binding region (RFX-type winged-helix). The segment at 292 to 334 (QQPMHQKPRYRPAQKTDSLGDSSSHSGLHSTPEQTTAAQNQHH) is disordered. Residues 307–334 (TDSLGDSSSHSGLHSTPEQTTAAQNQHH) show a composition bias toward low complexity. Phosphoserine is present on serine 416.

This sequence belongs to the RFX family. As to quaternary structure, homodimer; probably only forms homodimers in testis. Heterodimer; heterodimerizes with RFX1 and RFX3.

The protein localises to the nucleus. It localises to the cytoplasm. In terms of biological role, transcription factor that acts as a key regulator of spermatogenesis. Acts by regulating expression of genes required for the haploid phase during spermiogenesis, such as genes required for cilium assembly and function. Recognizes and binds the X-box, a regulatory motif with DNA sequence 5'-GTNRCC(0-3N)RGYAAC-3' present on promoters. Probably activates transcription of the testis-specific histone gene H1-6. This chain is DNA-binding protein RFX2 (RFX2), found in Pongo abelii (Sumatran orangutan).